The sequence spans 61 residues: Progonadoliberin-1 (61 aa).

Q1 carries the pyrrolidone carboxylic acid modification. G10 is modified (glycine amide).

Belongs to the GnRH family.

Its subcellular location is the secreted. Its function is as follows. Stimulates the secretion of gonadotropins; it stimulates the secretion of both luteinizing and follicle-stimulating hormones. The sequence is that of Progonadoliberin-1 (GNRH1) from Ovis aries (Sheep).